A 568-amino-acid polypeptide reads, in one-letter code: MTLRLSRRAYAEMFGPTTGDRVRLADTELLIEIERDYTIYGEEVKFGGGKVIRDGMGQSQRVAADVPDTIITNAVILDHWGIVKADIAIKHGRIAAIGKAGNPDIQPGVTIAIGAATEVIAGEGLIVTAGGIDTHIHFISPQQIDEALASGVTTMLGGGTGPATGTNATTCTPGPWHMERMLQAADGWPINLGFLGKGNASLPQPLVEQIAAGAIGLKLHEDWGTTPAAIDNCLSVADDTDTQVAIHTDTLNEAGFVESTVAAFKGRTIHTYHTEGAGGGHAPDILKVCGEANVLPSSTNPTRPYTINTLDEHLDMLMVCHHLDPSIAEDLAFAESRIRRETIAAEDILHDLGALSMLSSDSQAMGRVGEVIIRTWQTAHKMKVQRGALPEDGARNDNFRAKRYVAKYTINPAITHGIAHEVGSIEPGKWADLVLWEPAFFGIKPSMILKGGMIAVAQMGDPNASIPTPQPVHYREMFATRGGALARTSLTFVSQMAADAGIAERYGLAKRIVPVRNCRNVTKADMIHNAWRPSISVDPETYDVIADGQLLTCEPASVLPMAQRYFLF.

The 439-residue stretch at 130–568 folds into the Urease domain; that stretch reads GGIDTHIHFI…LPMAQRYFLF (439 aa). Ni(2+) contacts are provided by H135, H137, and K218. K218 is subject to N6-carboxylysine. H220 serves as a coordination point for substrate. Residues H247 and H273 each coordinate Ni(2+). Catalysis depends on H321, which acts as the Proton donor. D361 provides a ligand contact to Ni(2+).

This sequence belongs to the metallo-dependent hydrolases superfamily. Urease alpha subunit family. In terms of assembly, heterotrimer of UreA (gamma), UreB (beta) and UreC (alpha) subunits. Three heterotrimers associate to form the active enzyme. Ni cation serves as cofactor. In terms of processing, carboxylation allows a single lysine to coordinate two nickel ions.

The protein localises to the cytoplasm. It catalyses the reaction urea + 2 H2O + H(+) = hydrogencarbonate + 2 NH4(+). The protein operates within nitrogen metabolism; urea degradation; CO(2) and NH(3) from urea (urease route): step 1/1. The polypeptide is Urease subunit alpha (Burkholderia ambifaria (strain ATCC BAA-244 / DSM 16087 / CCUG 44356 / LMG 19182 / AMMD) (Burkholderia cepacia (strain AMMD))).